A 243-amino-acid polypeptide reads, in one-letter code: Adenylate dimethylallyltransferase (243 aa).

The enzyme catalyses dimethylallyl diphosphate + AMP = N(6)-(dimethylallyl)adenosine 5'-phosphate + diphosphate. Transfers dimethylallyl groups to AMP as part of the biosynthesis of cytokinin phytohormones. The sequence is that of Adenylate dimethylallyltransferase (tzs) from Agrobacterium tumefaciens (strain T37).